The primary structure comprises 96 residues: Co-chaperonin GroES (96 aa).

The protein belongs to the GroES chaperonin family. In terms of assembly, heptamer of 7 subunits arranged in a ring. Interacts with the chaperonin GroEL.

It localises to the cytoplasm. Its function is as follows. Together with the chaperonin GroEL, plays an essential role in assisting protein folding. The GroEL-GroES system forms a nano-cage that allows encapsulation of the non-native substrate proteins and provides a physical environment optimized to promote and accelerate protein folding. GroES binds to the apical surface of the GroEL ring, thereby capping the opening of the GroEL channel. This chain is Co-chaperonin GroES, found in Geotalea uraniireducens (strain Rf4) (Geobacter uraniireducens).